The following is a 95-amino-acid chain: Beta-alanine degradation protein BauB (95 aa).

Residues Trp23 to Val90 enclose the Cupin type-2 domain.

Functionally, involved in the degradation of beta-alanine. The chain is Beta-alanine degradation protein BauB (bauB) from Pseudomonas aeruginosa (strain ATCC 15692 / DSM 22644 / CIP 104116 / JCM 14847 / LMG 12228 / 1C / PRS 101 / PAO1).